We begin with the raw amino-acid sequence, 1107 residues long: Enolase-phosphatase E1 (1107 aa).

2 residues coordinate Mg(2+): Asp19 and Glu21. Substrate-binding positions include 152–153 (SS) and Lys186. Position 211 (Asp211) interacts with Mg(2+). The segment at 258–1107 (SVKSTETENG…SATPSVETES (850 aa)) is disordered. Positions 260 to 289 (KSTETENGAEKETVTESTEKVADESEKETE) are enriched in basic and acidic residues. The segment covering 291–306 (ETAAAETENGAEAENG) has biased composition (low complexity). The segment covering 366–376 (DAMDVDAEMTD) has biased composition (acidic residues). Basic and acidic residues-rich tracts occupy residues 393 to 427 (VTEKTETEESPKEKETEMEAEAEVSKTDEKEDTKQ) and 435 to 462 (GEDKKGDVINKNAEDDIKVEEEKNKEEE). Residues 475-485 (DKMDVDEEDSA) show a composition bias toward acidic residues. 6 stretches are compositionally biased toward basic and acidic residues: residues 486 to 512 (VIEKKADNVDEKPVESTTDEVAKKEEN), 534 to 548 (DETKEAPSDAAKEES), 572 to 586 (TVEKSSAEKTESKSE), 593 to 604 (TSEKKVEDKSAN), 610 to 686 (KEPK…EVKA), and 693 to 776 (DESK…KSVD). Positions 794 to 803 (EETSATTEAQ) are enriched in low complexity. Composition is skewed to basic and acidic residues over residues 804 to 838 (ATKEDEKPVDTKTNENDKTTPEVKATEEKTDDAKS) and 849 to 908 (KEMK…ETKG). Low complexity predominate over residues 909 to 919 (VEATTAGPVEE). Over residues 920 to 935 (VAVEATEEDVAMEAES) the composition is skewed to acidic residues. Basic and acidic residues-rich tracts occupy residues 937-957 (DAVKEETKTEEPKSKVDKLDS), 1001-1028 (DEVKENGTSEKVNTKEESRVPENGEADS), and 1035-1047 (NHDEKADSDKEND). Residues 1048–1083 (TSASNIEEASSATTTTTNGTSTESDSSSTTPSSETV) show a composition bias toward low complexity.

This sequence belongs to the HAD-like hydrolase superfamily. MasA/MtnC family. As to quaternary structure, monomer. The cofactor is Mg(2+).

The protein localises to the cytoplasm. It is found in the nucleus. The catalysed reaction is 5-methylsulfanyl-2,3-dioxopentyl phosphate + H2O = 1,2-dihydroxy-5-(methylsulfanyl)pent-1-en-3-one + phosphate. It participates in amino-acid biosynthesis; L-methionine biosynthesis via salvage pathway; L-methionine from S-methyl-5-thio-alpha-D-ribose 1-phosphate: step 3/6. It functions in the pathway amino-acid biosynthesis; L-methionine biosynthesis via salvage pathway; L-methionine from S-methyl-5-thio-alpha-D-ribose 1-phosphate: step 4/6. Bifunctional enzyme that catalyzes the enolization of 2,3-diketo-5-methylthiopentyl-1-phosphate (DK-MTP-1-P) into the intermediate 2-hydroxy-3-keto-5-methylthiopentenyl-1-phosphate (HK-MTPenyl-1-P), which is then dephosphorylated to form the acireductone 1,2-dihydroxy-3-keto-5-methylthiopentene (DHK-MTPene). The polypeptide is Enolase-phosphatase E1 (Aedes aegypti (Yellowfever mosquito)).